An 89-amino-acid chain; its full sequence is Small ribosomal subunit protein bS20 (89 aa).

This sequence belongs to the bacterial ribosomal protein bS20 family.

Binds directly to 16S ribosomal RNA. In Wolbachia sp. subsp. Brugia malayi (strain TRS), this protein is Small ribosomal subunit protein bS20.